Reading from the N-terminus, the 188-residue chain is dCTP deaminase (188 aa).

Residues lysine 111 to arginine 116, threonine 135 to glutamate 137, glutamine 156, tyrosine 170, and glutamine 180 each bind dCTP. Residue glutamate 137 is the Proton donor/acceptor of the active site.

It belongs to the dCTP deaminase family. In terms of assembly, homotrimer.

The catalysed reaction is dCTP + H2O + H(+) = dUTP + NH4(+). It participates in pyrimidine metabolism; dUMP biosynthesis; dUMP from dCTP (dUTP route): step 1/2. In terms of biological role, catalyzes the deamination of dCTP to dUTP. The polypeptide is dCTP deaminase (Methylococcus capsulatus (strain ATCC 33009 / NCIMB 11132 / Bath)).